The primary structure comprises 359 residues: Peptide chain release factor 1 (359 aa).

N5-methylglutamine is present on Q236.

The protein belongs to the prokaryotic/mitochondrial release factor family. Post-translationally, methylated by PrmC. Methylation increases the termination efficiency of RF1.

It is found in the cytoplasm. Functionally, peptide chain release factor 1 directs the termination of translation in response to the peptide chain termination codons UAG and UAA. In Streptococcus pyogenes serotype M12 (strain MGAS2096), this protein is Peptide chain release factor 1.